The sequence spans 563 residues: Calnexin homolog (563 aa).

Positions 1-23 (MRFNAAITGALVSSATLMGQAHA) are cleaved as a signal peptide. Topologically, residues 24 to 493 (EETEKKADAT…PINAVKQVPE (470 aa)) are lumenal. A Ca(2+)-binding site is contributed by Asp98. Cys141 and Cys175 are disulfide-bonded. An alpha-D-glucoside is bound by residues Tyr145, Lys147, Tyr166, and Asp173. A glycan (N-linked (GlcNAc...) asparagine) is linked at Asn236. Residues 241–323 (EDFAPPVNPE…EKPEDWDDEE (83 aa)) form a disordered region. A compositionally biased stretch (basic and acidic residues) spans 249–279 (PEKEIDDPKDKKPADWVDEAKIPDPEAKKPD). The tract at residues 253–386 (IDDPKDKKPA…RKIPNPAYFE (134 aa)) is p domain (Extended arm). Acidic residues predominate over residues 280 to 305 (DWDEDAPYEIVDEEATMPEDWLEDEP). Cysteines 337 and 343 form a disulfide. An alpha-D-glucoside is bound at residue Glu402. Position 413 (Asp413) interacts with Ca(2+). Residues 494-514 (VAGGLGALLLTMILVIVGAVG) traverse the membrane as a helical segment. The Cytoplasmic segment spans residues 515–563 (ASSPAPAAAAKKGKEAASAAKEKASEAVSSAADTAKGAATKRNTRSSAQ). The disordered stretch occupies residues 521 to 563 (AAAAKKGKEAASAAKEKASEAVSSAADTAKGAATKRNTRSSAQ). Residues 526–539 (KGKEAASAAKEKAS) show a composition bias toward basic and acidic residues.

This sequence belongs to the calreticulin family.

The protein localises to the endoplasmic reticulum membrane. Functionally, interacts with newly synthesized monoglucosylated glycoproteins in the endoplasmic reticulum. It may act in assisting protein assembly and/or in the retention within the ER of unassembled protein subunits. It seems to play a major role in the quality control apparatus of the ER by the retention of incorrectly folded proteins. The polypeptide is Calnexin homolog (Aspergillus fumigatus (strain ATCC MYA-4609 / CBS 101355 / FGSC A1100 / Af293) (Neosartorya fumigata)).